Reading from the N-terminus, the 661-residue chain is UvrABC system protein C (661 aa).

A GIY-YIG domain is found at Ala-26 to Val-105. The 36-residue stretch at Asp-215–Leu-250 folds into the UVR domain.

This sequence belongs to the UvrC family. Interacts with UvrB in an incision complex.

Its subcellular location is the cytoplasm. Functionally, the UvrABC repair system catalyzes the recognition and processing of DNA lesions. UvrC both incises the 5' and 3' sides of the lesion. The N-terminal half is responsible for the 3' incision and the C-terminal half is responsible for the 5' incision. The polypeptide is UvrABC system protein C (Synechococcus sp. (strain CC9902)).